Reading from the N-terminus, the 268-residue chain is Lipase 1 (268 aa).

Positions 1-29 (MRRFRLVGFLSSLVLAAGAALTGAATAQA) are cleaved as a signal peptide. The active-site Nucleophile is the Ser-44. 3 disulfides stabilise this stretch: Cys-61-Cys-86, Cys-127-Cys-135, and Cys-185-Cys-231. The active site involves His-250.

The protein belongs to the 'GDSL' lipolytic enzyme family. As to quaternary structure, monomer.

It localises to the secreted. It carries out the reaction a triacylglycerol + H2O = a diacylglycerol + a fatty acid + H(+). Its activity is regulated as follows. Strongly inhibited by Ag(+). The cations Ca(2+), Mg(2+), Co(2+) and Cu(2+) do not significantly reduce the lipolytic activity of SCO1725. Is also inhibited by DTT in vitro, but not by EDTA or by the reagent masking SH-groups, p-hydroxymercuribenzoate (pHMB). Is resistant to PMSF inhibition, except in the presence of Ca(2+). Is also strongly inhibited by 3,4-dichloroisocoumarin (DCI), another inhibitor of serine hydrolases. Addition of tetrahydrofuran and 1,4-dioxane significantly increases (2- and 4- fold, respectively) hydrolytic activity of lipase towards p-nitrophenyl caprylate. Its function is as follows. Catalyzes the hydrolysis of fatty acid esters with a preference for mid-length acyl chain (C10-C16). Is able to hydrolyze the triacylglycerol triolein and mixed triacylglycerols from a wide range of natural oils; better activity is obtained with corn-, wheat germ- and olive oil that have higher content of linoleic and/or oleic acid (C18:2; C18:1, cis). Tween detergents are also substrates for this enzyme. Displays arylesterase activity towards p-nitrophenyl alkanoate esters and alpha- and beta-naphthyl esters. In Streptomyces coelicolor (strain ATCC BAA-471 / A3(2) / M145), this protein is Lipase 1.